A 900-amino-acid polypeptide reads, in one-letter code: Alanine--tRNA ligase (900 aa).

Zn(2+)-binding residues include His-568, His-572, Cys-672, and His-676.

This sequence belongs to the class-II aminoacyl-tRNA synthetase family. Zn(2+) is required as a cofactor.

Its subcellular location is the cytoplasm. The enzyme catalyses tRNA(Ala) + L-alanine + ATP = L-alanyl-tRNA(Ala) + AMP + diphosphate. Catalyzes the attachment of alanine to tRNA(Ala) in a two-step reaction: alanine is first activated by ATP to form Ala-AMP and then transferred to the acceptor end of tRNA(Ala). Also edits incorrectly charged Ser-tRNA(Ala) and Gly-tRNA(Ala) via its editing domain. The polypeptide is Alanine--tRNA ligase (Mycoplasma genitalium (strain ATCC 33530 / DSM 19775 / NCTC 10195 / G37) (Mycoplasmoides genitalium)).